Here is a 179-residue protein sequence, read N- to C-terminus: UPF0227 protein VS_2073 (179 aa).

This sequence belongs to the UPF0227 family.

This Vibrio atlanticus (strain LGP32) (Vibrio splendidus (strain Mel32)) protein is UPF0227 protein VS_2073.